The sequence spans 149 residues: Ribosomal RNA large subunit methyltransferase H (149 aa).

Residues L71, G98, and 117-122 (LSKLTL) each bind S-adenosyl-L-methionine.

The protein belongs to the RNA methyltransferase RlmH family. In terms of assembly, homodimer.

Its subcellular location is the cytoplasm. It catalyses the reaction pseudouridine(1915) in 23S rRNA + S-adenosyl-L-methionine = N(3)-methylpseudouridine(1915) in 23S rRNA + S-adenosyl-L-homocysteine + H(+). Its function is as follows. Specifically methylates the pseudouridine at position 1915 (m3Psi1915) in 23S rRNA. The sequence is that of Ribosomal RNA large subunit methyltransferase H from Campylobacter jejuni subsp. doylei (strain ATCC BAA-1458 / RM4099 / 269.97).